Here is a 171-residue protein sequence, read N- to C-terminus: Ribosome maturation factor RimM (171 aa).

Residues 97–170 (KLNYFSWDHY…IIYMKLPVGL (74 aa)) form the PRC barrel domain.

This sequence belongs to the RimM family. In terms of assembly, binds ribosomal protein uS19.

It localises to the cytoplasm. An accessory protein needed during the final step in the assembly of 30S ribosomal subunit, possibly for assembly of the head region. Essential for efficient processing of 16S rRNA. May be needed both before and after RbfA during the maturation of 16S rRNA. It has affinity for free ribosomal 30S subunits but not for 70S ribosomes. The sequence is that of Ribosome maturation factor RimM from Azobacteroides pseudotrichonymphae genomovar. CFP2.